The primary structure comprises 400 residues: Putative transposase for insertion sequence element IS5376 (400 aa).

The region spanning 5–67 is the HTH IS21-type domain; the sequence is GEFFMIKEMY…PFKPYLQKRM (63 aa). Residues 20 to 39 constitute a DNA-binding region (H-T-H motif); sequence ISDIARELGIDRKTVRKYIH. Positions 35–55 are disordered; sequence RKYIHSPNPPSKSKRKQRKSK. An Integrase catalytic domain is found at 113 to 287; sequence YETLPGEQMQ…SPQERWAEES (175 aa).

Belongs to the transposase IS21/IS408/IS1162 family.

Functionally, involved in the transposition of the insertion sequence. This is Putative transposase for insertion sequence element IS5376 from Geobacillus stearothermophilus (Bacillus stearothermophilus).